Reading from the N-terminus, the 312-residue chain is Deoxycytidylate deaminase (312 aa).

The CMP/dCMP-type deaminase domain occupies 162 to 291 (SWDSYFMKLA…RMDEESFKVL (130 aa)). Residue histidine 233 participates in Zn(2+) binding. Residue glutamate 235 is the Proton donor of the active site. The Zn(2+) site is built by cysteine 260 and cysteine 263.

It belongs to the cytidine and deoxycytidylate deaminase family. Requires Zn(2+) as cofactor.

The enzyme catalyses dCMP + H2O + H(+) = dUMP + NH4(+). Its activity is regulated as follows. Allosteric enzyme whose activity is greatly influenced by the end products of its metabolic pathway, dCTP and dTTP. Functionally, catalyzes the hydrolytic deamination of dCMP to yield dUMP, the nucleotide substrate for thymidylate synthetase. The sequence is that of Deoxycytidylate deaminase from Saccharomyces cerevisiae (strain ATCC 204508 / S288c) (Baker's yeast).